The chain runs to 386 residues: Trichocyst matrix protein T2-A (386 aa).

The signal sequence occupies residues 1 to 19; sequence MKTVILALALIVLASSTQA. Positions 20 to 48 are excised as a propeptide; sequence DVIATIKKIDQSPFGRTLFDTIYLELQTG. A coiled-coil region spans residues 51–154; the sequence is LDRLLSTLTD…AEEHEDFEEK (104 aa). The propeptide occupies 184–238; it reads KGKATKQTHKFTKEVASMIQKHFTTSAKKTAKFQHRKGYSKLFKAFATIASKVEQ. Positions 293–332 form a coiled coil; it reads SALANATSDLASLNDIIAQVEASLDTTEQRIENVSADRHD.

This sequence belongs to the TMP family.

It is found in the trichocyst. Its function is as follows. Structural protein that crystallize inside the trichocyst matrix. In Paramecium tetraurelia, this protein is Trichocyst matrix protein T2-A (T2A).